A 157-amino-acid chain; its full sequence is Endoribonuclease YbeY (157 aa).

3 residues coordinate Zn(2+): H114, H118, and H124.

Belongs to the endoribonuclease YbeY family. It depends on Zn(2+) as a cofactor.

The protein localises to the cytoplasm. In terms of biological role, single strand-specific metallo-endoribonuclease involved in late-stage 70S ribosome quality control and in maturation of the 3' terminus of the 16S rRNA. This Caulobacter vibrioides (strain ATCC 19089 / CIP 103742 / CB 15) (Caulobacter crescentus) protein is Endoribonuclease YbeY.